The sequence spans 121 residues: Large ribosomal subunit protein bL12 (121 aa).

This sequence belongs to the bacterial ribosomal protein bL12 family. In terms of assembly, homodimer. Part of the ribosomal stalk of the 50S ribosomal subunit. Forms a multimeric L10(L12)X complex, where L10 forms an elongated spine to which 2 to 4 L12 dimers bind in a sequential fashion. Binds GTP-bound translation factors.

Functionally, forms part of the ribosomal stalk which helps the ribosome interact with GTP-bound translation factors. Is thus essential for accurate translation. This is Large ribosomal subunit protein bL12 from Mesomycoplasma hyopneumoniae (strain 7448) (Mycoplasma hyopneumoniae).